The primary structure comprises 436 residues: Chromosomal replication initiator protein DnaA (436 aa).

The tract at residues 1 to 69 is domain I, interacts with DnaA modulators; the sequence is MLADEVLELL…AHLFEVKTGT (69 aa). The domain II stretch occupies residues 69-99; the sequence is TKPNVEITTQTKLKSSKQNQVNIKQIKAQST. A domain III, AAA+ region region spans residues 100–314; that stretch reads LLNPAYTFEN…SAIINLNAYA (215 aa). ATP is bound by residues G144, G146, K147, and T148. Positions 315-436 are domain IV, binds dsDNA; the sequence is NLMRQEITLD…ELKNKILTKG (122 aa).

Belongs to the DnaA family. Oligomerizes as a right-handed, spiral filament on DNA at oriC.

It is found in the cytoplasm. Plays an essential role in the initiation and regulation of chromosomal replication. ATP-DnaA binds to the origin of replication (oriC) to initiate formation of the DNA replication initiation complex once per cell cycle. Binds the DnaA box (a 9 base pair repeat at the origin) and separates the double-stranded (ds)DNA. Forms a right-handed helical filament on oriC DNA; dsDNA binds to the exterior of the filament while single-stranded (ss)DNA is stabiized in the filament's interior. The ATP-DnaA-oriC complex binds and stabilizes one strand of the AT-rich DNA unwinding element (DUE), permitting loading of DNA polymerase. After initiation quickly degrades to an ADP-DnaA complex that is not apt for DNA replication. Binds acidic phospholipids. This chain is Chromosomal replication initiator protein DnaA, found in Campylobacter curvus (strain 525.92).